We begin with the raw amino-acid sequence, 607 residues long: Arginine--tRNA ligase (607 aa).

Positions 147-157 (PNIAKEMHVGH) match the 'HIGH' region motif.

Belongs to the class-I aminoacyl-tRNA synthetase family. Monomer.

The protein localises to the cytoplasm. It catalyses the reaction tRNA(Arg) + L-arginine + ATP = L-arginyl-tRNA(Arg) + AMP + diphosphate. This chain is Arginine--tRNA ligase, found in Prochlorococcus marinus (strain NATL1A).